We begin with the raw amino-acid sequence, 387 residues long: Monomeric sarcosine oxidase (387 aa).

6–36 is a binding site for FAD; that stretch reads DVIVVGAGSMGMAAGYYLAKQGVKTLLVDSF. C316 bears the S-8alpha-FAD cysteine mark.

This sequence belongs to the MSOX/MTOX family. MSOX subfamily. Monomer. FAD serves as cofactor.

The protein localises to the cytoplasm. The enzyme catalyses sarcosine + O2 + H2O = formaldehyde + glycine + H2O2. Its function is as follows. Catalyzes the oxidative demethylation of sarcosine. The polypeptide is Monomeric sarcosine oxidase (soxA) (Bacillus sp. (strain NS-129)).